A 71-amino-acid chain; its full sequence is Non-disulfide-bridged peptide 5.5 (71 aa).

The signal sequence occupies residues 1–23; it reads MKTQFIVLIVAIVFLQLLSQSEA. Residue L36 is modified to Leucine amide. Residues 40-71 constitute a propeptide that is removed on maturation; the sequence is DLRHLDLDQFDDMFDQPEISAADMKFLQDLLR.

It belongs to the non-disulfide-bridged peptide (NDBP) superfamily. Short antimicrobial peptide (group 4) family. As to expression, expressed by the venom gland.

It is found in the secreted. Its subcellular location is the target cell membrane. Antimicrobial peptide. Is active on Mycobacterium abscessus subsp. massiliense (MBC=200 uM), a rapidly growing and emerging pathogen associated with healthcare infections. Also shows antifungal activities. Has a weak hemolytic activity on human erythrocytes (10% at 610 uM), indicating a low toxicity (therapeutic index (TI)=3.05). In addition, treatment of infected macrophages reduces the bacterial load. In vivo, treatment of M.abscessus-infected mice causes a decrease in the bacterial load in the lungs and liver. This Hoffmannihadrurus gertschi (Scorpion) protein is Non-disulfide-bridged peptide 5.5.